Reading from the N-terminus, the 616-residue chain is MDADYGIPRELSDLQKLRSHYHPELPPCLQGTTVRVELRDATTAADPSGEHTIKRFFPHTYGQPLAHFLRATAKVPDAQIITEHPAIRVGVLFCGRQSPGGHNVIWGLHDALKVHNPKNILLGFLGGSEGLFAQKTLEITDDVLATYKNQGGYDMLGRTKDQIRTTEQVNAAMAACKALKLDGLVIIGGVTSNTDAAHLAEKFAETKCLTKVVGVPVTLNGDLKNQFVEANVGFDTICKVNSQLISNVCTDALSAEKYYYFIRLMGRKASHVALECTLQSHPNMVILGEEVAASKLTIFDITQQICDAVQARAEHDKNHGVILLPEGLIESIPEVYALLQEIHGLLRQGVSADKISSQLSPWASALFEFLPHFIRKQLLLHPESDDSAQLSQIETEKLIAHLVETEMNKRLKEGTYKGKKFNAICHFFGYQARGSLPSKFDCDYAYVLGHVCYHILAAGLNGYMATITNLKNPANKWHCGASPISAMMTVKRYGRGPGKASIGVPALHPATVDLRGKSYELLSQNATKFLLDDVYRNPGPLQFDGPGADAKAVSLCVEDQDYIGRIKKLQEYLDKVRTIVKPGCSQDVLKAALSAMASVTDILSVISSPSSVSTPF.

The protein belongs to the phosphofructokinase type A (PFKA) family. PPi-dependent PFK group II subfamily. Clade 'Long' sub-subfamily. Tetramer of two alpha (regulatory) and two beta (catalytic) chains.

Its subcellular location is the cytoplasm. The protein operates within carbohydrate degradation; glycolysis; D-glyceraldehyde 3-phosphate and glycerone phosphate from D-glucose: step 3/4. With respect to regulation, allosterically activated by fructose 2,6-bisphosphate. In terms of biological role, regulatory subunit of pyrophosphate--fructose 6-phosphate 1-phosphotransferase. This Solanum tuberosum (Potato) protein is Pyrophosphate--fructose 6-phosphate 1-phosphotransferase subunit alpha.